The sequence spans 491 residues: GTPase Der (491 aa).

EngA-type G domains follow at residues 3-166 and 200-373; these read PVVA…AEAM and IKLA…DSAT. GTP-binding positions include 9–16, 56–60, 118–121, 206–213, 253–257, and 318–321; these read GRPNVGKS, DTGGI, NKVD, GKPNVGKS, DTAGV, and NKWD. In terms of domain architecture, KH-like spans 374–458; it reads RRVSTSMLTR…PIQIRFQEGD (85 aa). A disordered region spans residues 472-491; sequence QERRRKRALSHINDRKTKGE.

It belongs to the TRAFAC class TrmE-Era-EngA-EngB-Septin-like GTPase superfamily. EngA (Der) GTPase family. Associates with the 50S ribosomal subunit.

GTPase that plays an essential role in the late steps of ribosome biogenesis. The sequence is that of GTPase Der from Shewanella denitrificans (strain OS217 / ATCC BAA-1090 / DSM 15013).